We begin with the raw amino-acid sequence, 830 residues long: Probable glucan 1,3-beta-glucosidase D (830 aa).

Composition is skewed to basic and acidic residues over residues 1-11 (MPGHSRSRDRL) and 74-84 (VHEHDHDHEYD). Disordered regions lie at residues 1 to 91 (MPGH…EEPW), 127 to 163 (MSGALGDDGPPPLPSDALGRGKGKKRLDRETRRQRRK), and 260 to 297 (GGPGMEMRHRGGGGPPAEGLLQKEGDWDGSTKGSSTSA). At 1-307 (MPGHSRSRDR…RPSFWKRYHK (307 aa)) the chain is on the cytoplasmic side. Positions 147 to 163 (GKGKKRLDRETRRQRRK) are enriched in basic residues. Residues 308–328 (TFIFFAILIVLAAIAIPVGII) form a helical; Signal-anchor for type II membrane protein membrane-spanning segment. The Extracellular segment spans residues 329–830 (EARRLHGTSG…PSFGNLPEYY (502 aa)). Residues Asn-341, Asn-376, Asn-381, Asn-393, Asn-397, Asn-546, and Asn-558 are each glycosylated (N-linked (GlcNAc...) asparagine). The Proton donor role is filled by Glu-597. N-linked (GlcNAc...) asparagine glycans are attached at residues Asn-610, Asn-669, and Asn-689. Glu-702 functions as the Nucleophile in the catalytic mechanism.

The protein belongs to the glycosyl hydrolase 5 (cellulase A) family.

It localises to the cell membrane. The enzyme catalyses Successive hydrolysis of beta-D-glucose units from the non-reducing ends of (1-&gt;3)-beta-D-glucans, releasing alpha-glucose.. Glucosidase involved in the degradation of cellulosic biomass. Active on lichenan. The protein is Probable glucan 1,3-beta-glucosidase D (exgD) of Aspergillus niger (strain ATCC MYA-4892 / CBS 513.88 / FGSC A1513).